The primary structure comprises 385 residues: MNHLRAEGPASVLAIGTANPENILIQDEFPDYYFRVTKSEHMTQLKEKFRKICDKSMIRKRNCFLNEEHLKQNPRLVEHEMQTLDARQDMLVVEVPKLGKDACAKAIKEWGQPKSKITHLIFTSASTTDMPGADYHCAKLLGLSPSVKRVMMYQLGCYGGGTVLRIAKDIAENNKGARVLAVCCDIMACLFRGPSDSDLELLVGQAIFGDGAAAVIVGAEPDESVGERPIFELVSTGQTILPNSEGTIGGHIREAGLIFDLHKDVPMLISNNIEKCLIEAFTPIGISDWNSIFWITHPGGKAILDKVEEKLDLKKEKFVDSRHVLSEHGNMSSSTVLFVMDELRKRSLEEGKSTTGDGFEWGVLFGFGPGLTVERVVVRSVPIKY.

Cys157 is an active-site residue.

The protein belongs to the thiolase-like superfamily. Chalcone/stilbene synthases family. Expressed in glandular trichomes.

It localises to the cytoplasm. Its function is as follows. Polyketide synthase responsible for the biosynthesis of secondary metabolites. This chain is Polyketide synthase 4 (PKSG4), found in Cannabis sativa (Hemp).